The chain runs to 379 residues: Inositol 3-kinase (379 aa).

Residues Ser217, 267–270 (GAGD), and Asn294 contribute to the ATP site. Catalysis depends on Asp270, which acts as the Proton acceptor.

The protein belongs to the carbohydrate kinase pfkB family.

It carries out the reaction myo-inositol + ATP = 1D-myo-inositol 3-phosphate + ADP + H(+). Kinase that phosphorylates myo-inositol to produce multiple myo-inositol monophosphates, Ins(1)P, Ins(3)P, Ins(4)P, Ins(5)P and Ins(6)P. Participates in phytic acid biosynthesis in developing seeds. Phytic acid is the primary storage form of phosphorus in cereal grains and other plant seeds. In Zea mays (Maize), this protein is Inositol 3-kinase.